The primary structure comprises 433 residues: Schlafen-like protein 2 (433 aa).

The B30.2/SPRY domain maps to Met1–Phe168. Residues Glu199 to Tyr400 form an SLFN-like fold region. Residues Glu211 and Glu216 contribute to the active site.

This sequence belongs to the Schlafen family. In terms of assembly, component of the trimeric PUCH (precursor of 21U RNA 5'-end cleavage holoenzyme) complex; consisting of tofu-1, tofu-2 and either slfl-3 or slfl-4. Within the complex, interacts (via N-terminus) with tofu-1 (via N-terminus); the interaction stabilizes tofu-2 and may form a functional nuclease. Within the complex, interacts (via N-terminus) with slfl-3 (via N-terminus); the presence of tofu-1 is required for this interaction. Mg(2+) is required as a cofactor. Expressed in the germline.

The protein localises to the cytoplasm. Its subcellular location is the mitochondrion. With respect to regulation, inhibited by ethylenediaminetetraacetic acid (EDTA). In terms of biological role, component of the trimeric PUCH (precursor of 21U RNA 5'-end cleavage holoenzyme) complex, that acts as an endoribonuclease processing the 5'-end of precursor Piwi-interacting RNAs (piRNAs). The PUCH complex consists of tofu-1, tofu-2 and either slfl-3 or slfl-4, with tofu-2 exhibiting endoribonuclease activity. PUCH-mediated processing strictly requires a 7-methyl-G cap (m7 G-cap) and an uracil at position three (U3). PUCH also exhibits a strict bias for piRNA precursors with an A or G at position 1. Mature piRNA production is enhanced by the interaction of PUCH with the PETISCO complex, which is stabilizing piRNA precursors and allows their processing by PUCH. This is Schlafen-like protein 2 from Caenorhabditis elegans.